Consider the following 738-residue polypeptide: Phosphoribosylformylglycinamidine synthase subunit PurL (738 aa).

The active site involves histidine 53. The ATP site is built by tyrosine 56 and lysine 95. Glutamate 97 serves as a coordination point for Mg(2+). Substrate-binding positions include 98 to 101 (SHNH) and arginine 120. Histidine 99 serves as the catalytic Proton acceptor. Aspartate 121 is a Mg(2+) binding site. Glutamine 244 lines the substrate pocket. Aspartate 274 is a Mg(2+) binding site. A substrate-binding site is contributed by 318 to 320 (ESQ). Aspartate 499 and glycine 536 together coordinate ATP. Asparagine 537 contributes to the Mg(2+) binding site. Serine 539 is a substrate binding site.

It belongs to the FGAMS family. In terms of assembly, monomer. Part of the FGAM synthase complex composed of 1 PurL, 1 PurQ and 2 PurS subunits.

It localises to the cytoplasm. It carries out the reaction N(2)-formyl-N(1)-(5-phospho-beta-D-ribosyl)glycinamide + L-glutamine + ATP + H2O = 2-formamido-N(1)-(5-O-phospho-beta-D-ribosyl)acetamidine + L-glutamate + ADP + phosphate + H(+). It functions in the pathway purine metabolism; IMP biosynthesis via de novo pathway; 5-amino-1-(5-phospho-D-ribosyl)imidazole from N(2)-formyl-N(1)-(5-phospho-D-ribosyl)glycinamide: step 1/2. Functionally, part of the phosphoribosylformylglycinamidine synthase complex involved in the purines biosynthetic pathway. Catalyzes the ATP-dependent conversion of formylglycinamide ribonucleotide (FGAR) and glutamine to yield formylglycinamidine ribonucleotide (FGAM) and glutamate. The FGAM synthase complex is composed of three subunits. PurQ produces an ammonia molecule by converting glutamine to glutamate. PurL transfers the ammonia molecule to FGAR to form FGAM in an ATP-dependent manner. PurS interacts with PurQ and PurL and is thought to assist in the transfer of the ammonia molecule from PurQ to PurL. This chain is Phosphoribosylformylglycinamidine synthase subunit PurL, found in Leuconostoc mesenteroides subsp. mesenteroides (strain ATCC 8293 / DSM 20343 / BCRC 11652 / CCM 1803 / JCM 6124 / NCDO 523 / NBRC 100496 / NCIMB 8023 / NCTC 12954 / NRRL B-1118 / 37Y).